The chain runs to 62 residues: Large ribosomal subunit protein uL30 (62 aa).

The protein belongs to the universal ribosomal protein uL30 family. As to quaternary structure, part of the 50S ribosomal subunit.

This Dinoroseobacter shibae (strain DSM 16493 / NCIMB 14021 / DFL 12) protein is Large ribosomal subunit protein uL30.